The sequence spans 212 residues: Cytidylate kinase (212 aa).

Position 7 to 15 (7 to 15) interacts with ATP; that stretch reads GPAASGKGT.

The protein belongs to the cytidylate kinase family. Type 1 subfamily.

The protein resides in the cytoplasm. It carries out the reaction CMP + ATP = CDP + ADP. The catalysed reaction is dCMP + ATP = dCDP + ADP. This Rhodopseudomonas palustris (strain HaA2) protein is Cytidylate kinase.